We begin with the raw amino-acid sequence, 110 residues long: Ribonuclease P protein component 1 (110 aa).

This sequence belongs to the eukaryotic/archaeal RNase P protein component 1 family. Consists of a catalytic RNA component and at least 4-5 protein subunits.

It is found in the cytoplasm. The enzyme catalyses Endonucleolytic cleavage of RNA, removing 5'-extranucleotides from tRNA precursor.. Its function is as follows. Part of ribonuclease P, a protein complex that generates mature tRNA molecules by cleaving their 5'-ends. This is Ribonuclease P protein component 1 from Methanosarcina mazei (strain ATCC BAA-159 / DSM 3647 / Goe1 / Go1 / JCM 11833 / OCM 88) (Methanosarcina frisia).